The sequence spans 397 residues: Odorant receptor 22a (397 aa).

The Cytoplasmic portion of the chain corresponds to 1-49 (MLSKFFPHIKEKPLSERVKSRDAFIYLDRVMWSFGWTEPENKRWILPYK). The helical transmembrane segment at 50–70 (LWLAFVNIVMLILLPISISIE) threads the bilayer. Topologically, residues 71–86 (YLHRFKTFSAGEFLSS) are extracellular. A helical transmembrane segment spans residues 87–107 (LEIGVNMYGSSFKCAFTLIGF). The Cytoplasmic segment spans residues 108-136 (KKRQEAKVLLDQLDKRCLSDKERSTVHRY). Residues 137 to 157 (VAMGNFFDILYHIFYSTFVVM) traverse the membrane as a helical segment. The Extracellular segment spans residues 158 to 182 (NFPYFLLERRHAWRMYFPYIDSDEQ). A helical membrane pass occupies residues 183 to 203 (FYISSIAECFLMTEAIYMDLC). Over 204–263 (TDVCPLISMLMARCHISLLKQRLRNLRSKPGRTEDEYLEELTECIRDHRLLLDYVDALRP) the chain is Cytoplasmic. The helical transmembrane segment at 264–280 (VFSGTIFVQFLLIGTVL) threads the bilayer. The Extracellular portion of the chain corresponds to 281–286 (GLSMIN). A helical membrane pass occupies residues 287–304 (LMFFSTFWTGVATCLFMF). The Cytoplasmic segment spans residues 305-356 (DVSMETFPFCYLCNMIIDDCQEMSNCLFQSDWTSADRRYKSTLVYFLHNLQQ). A helical transmembrane segment spans residues 357–377 (PITLTAGGVFPISMQTNLAMV). Over 378 to 397 (KLAFSVVTVIKQFNLAERFQ) the chain is Extracellular.

This sequence belongs to the insect chemoreceptor superfamily. Heteromeric odorant receptor channel (TC 1.A.69) family. Or2a subfamily. In terms of assembly, interacts with Orco, via conserved C-terminal cytoplasmic loops. Complexes exist early in the endomembrane system in olfactory sensory neurons (OSNs), coupling these complexes to the conserved ciliary trafficking pathway. Interacts with snmp1. In terms of tissue distribution, expressed with Orco in 17-20 sensory neurons on the medial-proximal edge of the antenna. Expressed in the ab3A neuron which responds to ethyl butyrate.

Its subcellular location is the cell membrane. In terms of biological role, odorant receptor which mediates acceptance or avoidance behavior, depending on its substrates. The odorant receptor repertoire encodes a large collection of odor stimuli that vary widely in identity, intensity, and duration. Involved in the behavioral responses ethyl butyrate and to esters in more general. Complexes with Orco to form odorant-sensing units, providing sensitive and prolonged odorant signaling and calcium permeability. They are necessary and sufficient to promote functional reconstitution of odor-evoked signaling in sensory neurons that normally respond only to carbon dioxide. The protein is Odorant receptor 22a (Or22a) of Drosophila melanogaster (Fruit fly).